We begin with the raw amino-acid sequence, 235 residues long: Large ribosomal subunit protein uL1 (235 aa).

The protein belongs to the universal ribosomal protein uL1 family. As to quaternary structure, part of the 50S ribosomal subunit.

Functionally, binds directly to 23S rRNA. The L1 stalk is quite mobile in the ribosome, and is involved in E site tRNA release. In terms of biological role, protein L1 is also a translational repressor protein, it controls the translation of the L11 operon by binding to its mRNA. The protein is Large ribosomal subunit protein uL1 of Arthrobacter sp. (strain FB24).